A 292-amino-acid chain; its full sequence is MMAFAPPKNTDGPKMQTKMSTWTPLNHQLLNDRVFEERRALLGKWFDKWTDSQRRRILTGLLERCSLSQQKFCCRKLQEKIPAEALDFTTKLPRVLSLYIFSFLDPRSLCRCAQVCWHWKNLAELDQLWMLKCLRFNWYINFSPTPFEQGIWKKHYIQMVKELHITKPKTPPKDGFVIADVQLVTSNSPEEKQSPLSAFRSSSSLRKKNNSGEKALPPWRSSDKHPTDIIRFNYLDNRDPMETVQQGRRKRNQMTPDFSRQSHDKKNKLQDRTRLRKAQSMMSRRNPFPLCP.

In terms of domain architecture, F-box spans 86–132 (LDFTTKLPRVLSLYIFSFLDPRSLCRCAQVCWHWKNLAELDQLWMLK). Disordered stretches follow at residues 188–224 (SPEE…SSDK) and 238–292 (RDPM…PLCP). A compositionally biased stretch (low complexity) spans 194 to 204 (SPLSAFRSSSS). The segment covering 260–273 (RQSHDKKNKLQDRT) has biased composition (basic and acidic residues).

Part of a SCF (SKP1-cullin-F-box) protein ligase complex. Expressed in heart, spleen and colon.

Probably recognizes and binds to some phosphorylated proteins and promotes their ubiquitination and degradation. This Homo sapiens (Human) protein is F-box only protein 16 (FBXO16).